Consider the following 256-residue polypeptide: tRNA pseudouridine synthase A (256 aa).

Asp-52 acts as the Nucleophile in catalysis. Tyr-110 is a binding site for substrate.

The protein belongs to the tRNA pseudouridine synthase TruA family. Homodimer.

It catalyses the reaction uridine(38/39/40) in tRNA = pseudouridine(38/39/40) in tRNA. Its function is as follows. Formation of pseudouridine at positions 38, 39 and 40 in the anticodon stem and loop of transfer RNAs. The protein is tRNA pseudouridine synthase A of Stenotrophomonas maltophilia (strain R551-3).